The sequence spans 195 residues: Probable DNA-directed RNA polymerase subunit delta (195 aa).

Residues 14-83 enclose the HTH HARE-type domain; the sequence is LSMIEVARAI…GDNKWGLRSW (70 aa). 2 stretches are compositionally biased toward acidic residues: residues 119–138 and 145–195; these read GDED…DSYE and YDDE…GEEE. Positions 119–195 are disordered; that stretch reads GDEDAIDYSD…SDDDAEGEEE (77 aa).

The protein belongs to the RpoE family. RNAP is composed of a core of 2 alpha, a beta and a beta' subunits. The core is associated with a delta subunit and one of several sigma factors.

Functionally, participates in both the initiation and recycling phases of transcription. In the presence of the delta subunit, RNAP displays an increased specificity of transcription, a decreased affinity for nucleic acids, and an increased efficiency of RNA synthesis because of enhanced recycling. This chain is Probable DNA-directed RNA polymerase subunit delta, found in Streptococcus gordonii (strain Challis / ATCC 35105 / BCRC 15272 / CH1 / DL1 / V288).